The primary structure comprises 977 residues: Disks large-associated protein 1 (977 aa).

Disordered stretches follow at residues 150–203 (TKSH…GWWS) and 349–371 (KAMG…KVAA). Phosphoserine occurs at positions 169, 356, 359, 362, 366, 383, 412, 415, 419, 422, 431, 503, 510, and 562. At threonine 563 the chain carries Phosphothreonine. Serine 565 and serine 589 each carry phosphoserine. The residue at position 590 (threonine 590) is a Phosphothreonine. Phosphoserine occurs at positions 592 and 595. Interaction with DYL2 regions lie at residues 650 to 661 (LSIGIQVDDAEE) and 672 to 683 (SKFQSVGVQVEE). A disordered region spans residues 899-965 (WKQMDPLDKK…QNSATESAES (67 aa)). Basic and acidic residues-rich tracts occupy residues 903-912 (DPLDKKERRA) and 928-943 (IRER…EARK). Phosphoserine is present on serine 932. Residues 954–963 (VRQNSATESA) are compositionally biased toward polar residues. The short motif at 975 to 977 (TRL) is the PDZ-binding element.

The protein belongs to the SAPAP family. Interacts with guanylate kinase-like domain of DLG1, DLG2, DLG3, DLG4 and AIP1. Interacts with the PDZ domain of SHANK1, SHANK2 and SHANK3. Found in a complex with DLG4 and SHANK1, SHANK2 or SHANK3. Found in a complex with DLG4 and BEGAIN. Interacts with DYL2 and LRFN1. Interacts with MPP2 (via the SH3-Guanylate kinase-like sub-module). In terms of processing, ubiquitinated by TRIM3; leading to proteasomal degradation. In terms of tissue distribution, expressed in brain.

It localises to the cell membrane. The protein resides in the postsynaptic density. It is found in the synapse. In terms of biological role, part of the postsynaptic scaffold in neuronal cells. In Homo sapiens (Human), this protein is Disks large-associated protein 1 (DLGAP1).